The chain runs to 364 residues: Transcription elongation factor, mitochondrial (364 aa).

Residues 1-39 (MAWRTNLACLIKAGGRRWFPVPEYSSLPPVLNNTCSVRK) constitute a mitochondrion transit peptide.

It belongs to the TEFM family. In terms of assembly, interacts with POLRMT.

It localises to the mitochondrion matrix. It is found in the mitochondrion nucleoid. Transcription elongation factor which increases mitochondrial RNA polymerase processivity. Regulates transcription of the mitochondrial genome, including genes important for the oxidative phosphorylation machinery. The sequence is that of Transcription elongation factor, mitochondrial (Tefm) from Mus musculus (Mouse).